We begin with the raw amino-acid sequence, 145 residues long: Deoxyuridine 5'-triphosphate nucleotidohydrolase (145 aa).

Substrate-binding positions include 65-67 (RSG), Asn78, and 82-84 (TID).

It belongs to the dUTPase family. Requires Mg(2+) as cofactor.

It carries out the reaction dUTP + H2O = dUMP + diphosphate + H(+). It functions in the pathway pyrimidine metabolism; dUMP biosynthesis; dUMP from dCTP (dUTP route): step 2/2. Its function is as follows. This enzyme is involved in nucleotide metabolism: it produces dUMP, the immediate precursor of thymidine nucleotides and it decreases the intracellular concentration of dUTP so that uracil cannot be incorporated into DNA. In Clostridium tetani (strain Massachusetts / E88), this protein is Deoxyuridine 5'-triphosphate nucleotidohydrolase.